The chain runs to 456 residues: Exodeoxyribonuclease 7 large subunit (456 aa).

It belongs to the XseA family. Heterooligomer composed of large and small subunits.

Its subcellular location is the cytoplasm. It carries out the reaction Exonucleolytic cleavage in either 5'- to 3'- or 3'- to 5'-direction to yield nucleoside 5'-phosphates.. Bidirectionally degrades single-stranded DNA into large acid-insoluble oligonucleotides, which are then degraded further into small acid-soluble oligonucleotides. The protein is Exodeoxyribonuclease 7 large subunit of Shigella dysenteriae serotype 1 (strain Sd197).